The primary structure comprises 289 residues: Glucosamine-6-phosphate deaminase 1 (289 aa).

The Proton acceptor; for enolization step role is filled by aspartate 72. Catalysis depends on aspartate 141, which acts as the For ring-opening step. Histidine 143 (proton acceptor; for ring-opening step) is an active-site residue. The For ring-opening step role is filled by glutamate 148. Threonine 161 is subject to Phosphothreonine.

It belongs to the glucosamine/galactosamine-6-phosphate isomerase family. As to quaternary structure, homohexamer. As to expression, widely expressed. Detected in brain, liver, kidney, muscle, ovary, testis, spermatids and spermatozoa. In spermatids, located close to the developing acrosome vesicle. In spermatozoa, found close to the acrosomal region.

Its subcellular location is the cytoplasm. The catalysed reaction is alpha-D-glucosamine 6-phosphate + H2O = beta-D-fructose 6-phosphate + NH4(+). It participates in nucleotide-sugar biosynthesis; UDP-N-acetyl-alpha-D-glucosamine biosynthesis; alpha-D-glucosamine 6-phosphate from D-fructose 6-phosphate: step 1/1. With respect to regulation, allosterically activated by N-acetylglucosamine-6-phosphate (GlcNAc6P). In terms of biological role, catalyzes the reversible conversion of alpha-D-glucosamine 6-phosphate (GlcN-6P) into beta-D-fructose 6-phosphate (Fru-6P) and ammonium ion, a regulatory reaction step in de novo uridine diphosphate-N-acetyl-alpha-D-glucosamine (UDP-GlcNAc) biosynthesis via hexosamine pathway. Deamination is coupled to aldo-keto isomerization mediating the metabolic flux from UDP-GlcNAc toward Fru-6P. At high ammonium level can drive amination and isomerization of Fru-6P toward hexosamines and UDP-GlcNAc synthesis. Has a role in fine tuning the metabolic fluctuations of cytosolic UDP-GlcNAc and their effects on hyaluronan synthesis that occur during tissue remodeling. Seems to trigger calcium oscillations in mammalian eggs. These oscillations serve as the essential trigger for egg activation and early development of the embryo. This Mus musculus (Mouse) protein is Glucosamine-6-phosphate deaminase 1.